We begin with the raw amino-acid sequence, 328 residues long: DNA-directed RNA polymerase subunit alpha (328 aa).

Residues 1-234 (MQNSPTEYLK…GQLSVFADLE (234 aa)) form an alpha N-terminal domain (alpha-NTD) region. The segment at 248-328 (VDPILLRPVD…NWPPAGLEKV (81 aa)) is alpha C-terminal domain (alpha-CTD).

Belongs to the RNA polymerase alpha chain family. In terms of assembly, homodimer. The RNAP catalytic core consists of 2 alpha, 1 beta, 1 beta' and 1 omega subunit. When a sigma factor is associated with the core the holoenzyme is formed, which can initiate transcription.

The catalysed reaction is RNA(n) + a ribonucleoside 5'-triphosphate = RNA(n+1) + diphosphate. Its function is as follows. DNA-dependent RNA polymerase catalyzes the transcription of DNA into RNA using the four ribonucleoside triphosphates as substrates. The sequence is that of DNA-directed RNA polymerase subunit alpha from Methylobacillus flagellatus (strain ATCC 51484 / DSM 6875 / VKM B-1610 / KT).